Here is a 217-residue protein sequence, read N- to C-terminus: MTDAINPTLIERGRKVFAGDWHFIWASPSIETLPPMAGIEVAFAGRSNVGKSSLINALTGRNALARTSNTPGRTQELIFFDGPTDAGLRLVDMPGYGYAAASKAKVASWTSLIHKFLQGRATLARVYVLIDGRHGLKDVDLDILKTLDKSAVSYQIVFTKADQVKAAELEQRIAATKTVLAKHPAAFPELLMTSSRTGAGMPELRAAMIRLLDERGA.

The 178-residue stretch at 37–214 folds into the EngB-type G domain; the sequence is AGIEVAFAGR…RAAMIRLLDE (178 aa). GTP is bound by residues 45–52, 72–76, 92–95, 159–162, and 193–195; these read GRSNVGKS, GRTQE, DMPG, TKAD, and TSS. 2 residues coordinate Mg(2+): S52 and T74.

Belongs to the TRAFAC class TrmE-Era-EngA-EngB-Septin-like GTPase superfamily. EngB GTPase family. Mg(2+) serves as cofactor.

Its function is as follows. Necessary for normal cell division and for the maintenance of normal septation. This chain is Probable GTP-binding protein EngB, found in Rhodopseudomonas palustris (strain BisB5).